The chain runs to 861 residues: Probable beta-glucosidase A (861 aa).

An N-terminal signal peptide occupies residues 1 to 19; it reads MKLGWIEVAALAAASVVSA. Residues Asn62, Asn212, and Asn253 are each glycosylated (N-linked (GlcNAc...) asparagine). Residue Asp281 is part of the active site. Asn316, Asn323, Asn355, Asn443, Asn524, Asn543, Asn565, Asn669, Asn713, and Asn846 each carry an N-linked (GlcNAc...) asparagine glycan.

Belongs to the glycosyl hydrolase 3 family.

It is found in the secreted. It catalyses the reaction Hydrolysis of terminal, non-reducing beta-D-glucosyl residues with release of beta-D-glucose.. Its pathway is glycan metabolism; cellulose degradation. Its function is as follows. Beta-glucosidases are one of a number of cellulolytic enzymes involved in the degradation of cellulosic biomass. Catalyzes the last step releasing glucose from the inhibitory cellobiose. The protein is Probable beta-glucosidase A (bglA) of Aspergillus flavus (strain ATCC 200026 / FGSC A1120 / IAM 13836 / NRRL 3357 / JCM 12722 / SRRC 167).